Here is a 154-residue protein sequence, read N- to C-terminus: Myoglobin (154 aa).

A Globin domain is found at 2 to 148 (GLSDGEWTLV…FRNDMAAQYK (147 aa)). At serine 4 the chain carries Phosphoserine. Histidine 65 contributes to the nitrite binding site. Histidine 65 contacts O2. Residue threonine 68 is modified to Phosphothreonine. Histidine 94 contacts heme b.

Belongs to the globin family. As to quaternary structure, monomeric.

It localises to the cytoplasm. Its subcellular location is the sarcoplasm. The catalysed reaction is Fe(III)-heme b-[protein] + nitric oxide + H2O = Fe(II)-heme b-[protein] + nitrite + 2 H(+). The enzyme catalyses H2O2 + AH2 = A + 2 H2O. Monomeric heme protein which primary function is to store oxygen and facilitate its diffusion within muscle tissues. Reversibly binds oxygen through a pentacoordinated heme iron and enables its timely and efficient release as needed during periods of heightened demand. Depending on the oxidative conditions of tissues and cells, and in addition to its ability to bind oxygen, it also has a nitrite reductase activity whereby it regulates the production of bioactive nitric oxide. Under stress conditions, like hypoxia and anoxia, it also protects cells against reactive oxygen species thanks to its pseudoperoxidase activity. In Capra hircus (Goat), this protein is Myoglobin.